Here is a 218-residue protein sequence, read N- to C-terminus: Probable 3-keto-L-gulonate-6-phosphate decarboxylase (218 aa).

Asp-11 lines the substrate pocket. The Mg(2+) site is built by Glu-33 and Asp-62. Substrate is bound at residue Arg-194.

This sequence belongs to the HPS/KGPDC family. KGPDC subfamily. The cofactor is Mg(2+).

The catalysed reaction is 3-dehydro-L-gulonate 6-phosphate + H(+) = L-xylulose 5-phosphate + CO2. Its pathway is cofactor degradation; L-ascorbate degradation; D-xylulose 5-phosphate from L-ascorbate: step 2/4. Catalyzes the decarboxylation of 3-keto-L-gulonate-6-P into L-xylulose-5-P. Is involved in the anaerobic L-ascorbate utilization. The polypeptide is Probable 3-keto-L-gulonate-6-phosphate decarboxylase (ulaD) (Mycoplasma pneumoniae (strain ATCC 29342 / M129 / Subtype 1) (Mycoplasmoides pneumoniae)).